We begin with the raw amino-acid sequence, 341 residues long: Phosphoribosylformylglycinamidine cyclo-ligase (341 aa).

This sequence belongs to the AIR synthase family.

The protein localises to the cytoplasm. The enzyme catalyses 2-formamido-N(1)-(5-O-phospho-beta-D-ribosyl)acetamidine + ATP = 5-amino-1-(5-phospho-beta-D-ribosyl)imidazole + ADP + phosphate + H(+). The protein operates within purine metabolism; IMP biosynthesis via de novo pathway; 5-amino-1-(5-phospho-D-ribosyl)imidazole from N(2)-formyl-N(1)-(5-phospho-D-ribosyl)glycinamide: step 2/2. The polypeptide is Phosphoribosylformylglycinamidine cyclo-ligase (Lachnospira eligens (strain ATCC 27750 / DSM 3376 / VPI C15-48 / C15-B4) (Eubacterium eligens)).